We begin with the raw amino-acid sequence, 347 residues long: NADH-ubiquinone oxidoreductase chain 2 (347 aa).

11 consecutive transmembrane segments (helical) span residues S2–I22, H25–T45, A56–F76, F96–P116, I122–F142, L149–G169, I178–Y197, I202–L219, M241–M261, L278–Y298, and I326–L346.

The protein belongs to the complex I subunit 2 family.

It is found in the mitochondrion inner membrane. It catalyses the reaction a ubiquinone + NADH + 5 H(+)(in) = a ubiquinol + NAD(+) + 4 H(+)(out). Its function is as follows. Core subunit of the mitochondrial membrane respiratory chain NADH dehydrogenase (Complex I) that is believed to belong to the minimal assembly required for catalysis. Complex I functions in the transfer of electrons from NADH to the respiratory chain. The immediate electron acceptor for the enzyme is believed to be ubiquinone. The sequence is that of NADH-ubiquinone oxidoreductase chain 2 (MT-ND2) from Didelphis virginiana (North American opossum).